The primary structure comprises 150 residues: UPF0178 protein Sbal195_1808 (150 aa).

The protein belongs to the UPF0178 family.

The sequence is that of UPF0178 protein Sbal195_1808 from Shewanella baltica (strain OS195).